The sequence spans 209 residues: Adenylate kinase (209 aa).

10–15 provides a ligand contact to ATP; sequence GAGKGT. An NMP region spans residues 30–59; that stretch reads STGDLFRAAIKEQTDLGKKVKAVIDSGALV. AMP-binding positions include Thr31, Arg36, 57-59, 85-88, and Gln92; these read ALV and GFPR. Positions 121–158 are LID; that stretch reads GRRVCSSCGQSFHIEFVKPKKEGICDSCSGDLMIRPDD. ATP is bound at residue Arg122. Residues Cys125 and Cys128 each coordinate Zn(2+). Residue 131–132 coordinates ATP; the sequence is SF. Zn(2+) contacts are provided by Cys145 and Cys148. AMP-binding residues include Arg155 and Arg166. Pro194 serves as a coordination point for ATP.

The protein belongs to the adenylate kinase family. In terms of assembly, monomer.

The protein localises to the cytoplasm. It catalyses the reaction AMP + ATP = 2 ADP. The protein operates within purine metabolism; AMP biosynthesis via salvage pathway; AMP from ADP: step 1/1. Functionally, catalyzes the reversible transfer of the terminal phosphate group between ATP and AMP. Plays an important role in cellular energy homeostasis and in adenine nucleotide metabolism. The protein is Adenylate kinase of Treponema denticola (strain ATCC 35405 / DSM 14222 / CIP 103919 / JCM 8153 / KCTC 15104).